Here is a 549-residue protein sequence, read N- to C-terminus: Cytoplasmic trehalase (549 aa).

Substrate is bound by residues Arg168, 175-176 (WD), Asn212, 221-223 (RSQ), 292-294 (RDE), and Gly324. Active-site proton donor/acceptor residues include Asp326 and Glu509. Glu525 contributes to the substrate binding site.

The protein belongs to the glycosyl hydrolase 37 family. As to quaternary structure, monomer.

It localises to the cytoplasm. The enzyme catalyses alpha,alpha-trehalose + H2O = alpha-D-glucose + beta-D-glucose. Its pathway is glycan degradation; trehalose degradation; D-glucose from alpha,alpha-trehalose: step 1/1. Hydrolyzes trehalose to glucose. Could be involved, in cells returning to low osmolarity conditions, in the utilization of the accumulated cytoplasmic trehalose, which was synthesized in response to high osmolarity. This chain is Cytoplasmic trehalase, found in Salmonella schwarzengrund (strain CVM19633).